A 682-amino-acid chain; its full sequence is Methionine--tRNA ligase (682 aa).

Residues 15 to 25 carry the 'HIGH' region motif; it reads PYANGAIHLGH. Zn(2+)-binding residues include Cys146, Cys149, Cys159, and Cys162. A 'KMSKS' region motif is present at residues 331–335; the sequence is KMSKS. Lys334 serves as a coordination point for ATP. A tRNA-binding domain is found at 580 to 682; that stretch reads DFAKLDLRVA…QGVKPGMQVK (103 aa).

The protein belongs to the class-I aminoacyl-tRNA synthetase family. MetG type 1 subfamily. As to quaternary structure, homodimer. The cofactor is Zn(2+).

It is found in the cytoplasm. It carries out the reaction tRNA(Met) + L-methionine + ATP = L-methionyl-tRNA(Met) + AMP + diphosphate. In terms of biological role, is required not only for elongation of protein synthesis but also for the initiation of all mRNA translation through initiator tRNA(fMet) aminoacylation. The protein is Methionine--tRNA ligase of Pasteurella multocida (strain Pm70).